The primary structure comprises 140 residues: MAKKVEKVVKLQIPAGKANPAPPVGPALGQAGVNIMGFCKEFNARTQEDAGLIIPVEISVYEDRSFTFITKTPPAPVLLKKAAGVEKGSGEPNKTKVATVTKDQVREIANQKMQDLNAADEEAAMRIIEGTARSMGITVQ.

Belongs to the universal ribosomal protein uL11 family. Part of the ribosomal stalk of the 50S ribosomal subunit. Interacts with L10 and the large rRNA to form the base of the stalk. L10 forms an elongated spine to which L12 dimers bind in a sequential fashion forming a multimeric L10(L12)X complex. Post-translationally, one or more lysine residues are methylated.

In terms of biological role, forms part of the ribosomal stalk which helps the ribosome interact with GTP-bound translation factors. This Staphylococcus saprophyticus subsp. saprophyticus (strain ATCC 15305 / DSM 20229 / NCIMB 8711 / NCTC 7292 / S-41) protein is Large ribosomal subunit protein uL11.